Reading from the N-terminus, the 319-residue chain is Ribosomal RNA small subunit methyltransferase H (319 aa).

Residues 38–40 (GGH), D58, F82, D104, and Q111 each bind S-adenosyl-L-methionine.

The protein belongs to the methyltransferase superfamily. RsmH family.

The protein localises to the cytoplasm. It carries out the reaction cytidine(1402) in 16S rRNA + S-adenosyl-L-methionine = N(4)-methylcytidine(1402) in 16S rRNA + S-adenosyl-L-homocysteine + H(+). Functionally, specifically methylates the N4 position of cytidine in position 1402 (C1402) of 16S rRNA. The sequence is that of Ribosomal RNA small subunit methyltransferase H from Histophilus somni (strain 129Pt) (Haemophilus somnus).